The primary structure comprises 510 residues: Bifunctional purine biosynthesis protein PurH (510 aa).

The 142-residue stretch at 1–142 (MRALISVSDK…KNFKDVLIVT (142 aa)) folds into the MGS-like domain.

The protein belongs to the PurH family.

The enzyme catalyses (6R)-10-formyltetrahydrofolate + 5-amino-1-(5-phospho-beta-D-ribosyl)imidazole-4-carboxamide = 5-formamido-1-(5-phospho-D-ribosyl)imidazole-4-carboxamide + (6S)-5,6,7,8-tetrahydrofolate. The catalysed reaction is IMP + H2O = 5-formamido-1-(5-phospho-D-ribosyl)imidazole-4-carboxamide. It functions in the pathway purine metabolism; IMP biosynthesis via de novo pathway; 5-formamido-1-(5-phospho-D-ribosyl)imidazole-4-carboxamide from 5-amino-1-(5-phospho-D-ribosyl)imidazole-4-carboxamide (10-formyl THF route): step 1/1. It participates in purine metabolism; IMP biosynthesis via de novo pathway; IMP from 5-formamido-1-(5-phospho-D-ribosyl)imidazole-4-carboxamide: step 1/1. This is Bifunctional purine biosynthesis protein PurH from Campylobacter curvus (strain 525.92).